A 378-amino-acid polypeptide reads, in one-letter code: Putative F-box protein At4g17565 (378 aa).

Positions 16 to 63 (PKWSELCPDLLRSIFEQLSFTNLNRAKLVCRSWNSASRGCVPKRNQIP) constitute an F-box domain.

The chain is Putative F-box protein At4g17565 from Arabidopsis thaliana (Mouse-ear cress).